The sequence spans 234 residues: Isoprenyl transferase (234 aa).

Residue Asp-13 is part of the active site. Asp-13 serves as a coordination point for Mg(2+). Substrate contacts are provided by residues Gly-14–Arg-17, Trp-18, Arg-26, His-30, and Ser-58–Glu-60. The Proton acceptor role is filled by Asn-61. Substrate contacts are provided by residues Trp-62, Arg-64, Arg-180, and Arg-186–Ser-188. Glu-199 serves as a coordination point for Mg(2+).

It belongs to the UPP synthase family. In terms of assembly, homodimer. The cofactor is Mg(2+).

Functionally, catalyzes the condensation of isopentenyl diphosphate (IPP) with allylic pyrophosphates generating different type of terpenoids. In Helicobacter pylori (strain ATCC 700392 / 26695) (Campylobacter pylori), this protein is Isoprenyl transferase (uppS).